A 348-amino-acid chain; its full sequence is Anthranilate phosphoribosyltransferase (348 aa).

5-phospho-alpha-D-ribose 1-diphosphate is bound by residues glycine 89, 92-93 (GD), threonine 97, 99-102 (NIST), 117-125 (KHGNRSVSS), and serine 129. Residue glycine 89 coordinates anthranilate. Serine 101 contributes to the Mg(2+) binding site. An anthranilate-binding site is contributed by asparagine 120. Position 175 (arginine 175) interacts with anthranilate. Residues aspartate 233 and glutamate 234 each contribute to the Mg(2+) site.

Belongs to the anthranilate phosphoribosyltransferase family. As to quaternary structure, homodimer. Mg(2+) serves as cofactor.

It catalyses the reaction N-(5-phospho-beta-D-ribosyl)anthranilate + diphosphate = 5-phospho-alpha-D-ribose 1-diphosphate + anthranilate. It participates in amino-acid biosynthesis; L-tryptophan biosynthesis; L-tryptophan from chorismate: step 2/5. In terms of biological role, catalyzes the transfer of the phosphoribosyl group of 5-phosphorylribose-1-pyrophosphate (PRPP) to anthranilate to yield N-(5'-phosphoribosyl)-anthranilate (PRA). The polypeptide is Anthranilate phosphoribosyltransferase (Shewanella putrefaciens (strain CN-32 / ATCC BAA-453)).